Here is a 475-residue protein sequence, read N- to C-terminus: MSPKTETKASVGFKAGVKDYRLTYYTPEYQTKDTDILAAFRVTPQPGVPPEEAGAAVAAESSTGTWTTVWTDGLTSLDRYKGRCYDIEAVPGEESQFIAYVAYPLDLFEEGSVTNLFTSIVGNVFGFKALRALRLEDLRIPPAYSKTFQGPPHGIQVERDKLNKYGRPLLGCTIKPKLGLSAKNYGRAVYECLRGGLDFTKDDENVNSQPFMRWRDRFVFCAEALYKAQAETGEIKGHYLNATAGTCEEMMKRAVFARELGVPIVMHDYLTGGFTANTSLAHYCRDNGLLLHIHRAMHAVIDRQRNHGMHFRVLAKALRMSGGDHIHAGTVVGKLEGERDVTLGFVDLLRDDFIEKDRSRGIYFTQDWVSMPGVLPVASGGIHVWHMPALTEIFGDDSVLQFGGGTLGHPWGNAPGAVANRVALEACVQARNEGRDLAREGNEVIREATKWSPELAAACEVWKEIKFEFDTIDYL.

A propeptide spanning residues 1-2 is cleaved from the precursor; it reads MS. At Pro-3 the chain carries N-acetylproline. An N6,N6,N6-trimethyllysine modification is found at Lys-14. Residues Asn-123 and Thr-173 each coordinate substrate. The active-site Proton acceptor is Lys-175. Substrate is bound at residue Lys-177. The Mg(2+) site is built by Lys-201, Asp-203, and Glu-204. Lys-201 carries the N6-carboxylysine modification. Catalysis depends on His-294, which acts as the Proton acceptor. Arg-295, His-327, and Ser-379 together coordinate substrate.

It belongs to the RuBisCO large chain family. Type I subfamily. As to quaternary structure, heterohexadecamer of 8 large chains and 8 small chains; disulfide-linked. The disulfide link is formed within the large subunit homodimers. The cofactor is Mg(2+). In terms of processing, the disulfide bond which can form in the large chain dimeric partners within the hexadecamer appears to be associated with oxidative stress and protein turnover.

The protein localises to the plastid. Its subcellular location is the chloroplast. The enzyme catalyses 2 (2R)-3-phosphoglycerate + 2 H(+) = D-ribulose 1,5-bisphosphate + CO2 + H2O. The catalysed reaction is D-ribulose 1,5-bisphosphate + O2 = 2-phosphoglycolate + (2R)-3-phosphoglycerate + 2 H(+). Its function is as follows. RuBisCO catalyzes two reactions: the carboxylation of D-ribulose 1,5-bisphosphate, the primary event in carbon dioxide fixation, as well as the oxidative fragmentation of the pentose substrate in the photorespiration process. Both reactions occur simultaneously and in competition at the same active site. The chain is Ribulose bisphosphate carboxylase large chain from Larix occidentalis (Western larch).